Here is a 372-residue protein sequence, read N- to C-terminus: UDP-N-acetylglucosamine--N-acetylmuramyl-(pentapeptide) pyrophosphoryl-undecaprenol N-acetylglucosamine transferase (372 aa).

UDP-N-acetyl-alpha-D-glucosamine contacts are provided by residues 16–18 (TGG), Asn128, Arg164, Ser192, Ile250, and Gln295.

Belongs to the glycosyltransferase 28 family. MurG subfamily.

The protein resides in the cell inner membrane. It catalyses the reaction di-trans,octa-cis-undecaprenyl diphospho-N-acetyl-alpha-D-muramoyl-L-alanyl-D-glutamyl-meso-2,6-diaminopimeloyl-D-alanyl-D-alanine + UDP-N-acetyl-alpha-D-glucosamine = di-trans,octa-cis-undecaprenyl diphospho-[N-acetyl-alpha-D-glucosaminyl-(1-&gt;4)]-N-acetyl-alpha-D-muramoyl-L-alanyl-D-glutamyl-meso-2,6-diaminopimeloyl-D-alanyl-D-alanine + UDP + H(+). It participates in cell wall biogenesis; peptidoglycan biosynthesis. Cell wall formation. Catalyzes the transfer of a GlcNAc subunit on undecaprenyl-pyrophosphoryl-MurNAc-pentapeptide (lipid intermediate I) to form undecaprenyl-pyrophosphoryl-MurNAc-(pentapeptide)GlcNAc (lipid intermediate II). This Paraburkholderia phytofirmans (strain DSM 17436 / LMG 22146 / PsJN) (Burkholderia phytofirmans) protein is UDP-N-acetylglucosamine--N-acetylmuramyl-(pentapeptide) pyrophosphoryl-undecaprenol N-acetylglucosamine transferase.